The sequence spans 78 residues: Small ribosomal subunit protein uS17 (78 aa).

This sequence belongs to the universal ribosomal protein uS17 family. As to quaternary structure, part of the 30S ribosomal subunit.

In terms of biological role, one of the primary rRNA binding proteins, it binds specifically to the 5'-end of 16S ribosomal RNA. This is Small ribosomal subunit protein uS17 from Rhizobium meliloti (strain 1021) (Ensifer meliloti).